The chain runs to 371 residues: Neutral protease 2 homolog MGYG_03465 (371 aa).

Residues Met1 to Ala19 form the signal peptide. The propeptide occupies Tyr20 to Arg188. Intrachain disulfides connect Cys196–Cys267 and Cys274–Cys292. His316 is a Zn(2+) binding site. Residue Glu317 is part of the active site. 2 residues coordinate Zn(2+): His320 and Asp331.

Belongs to the peptidase M35 family. Zn(2+) serves as cofactor.

Its subcellular location is the secreted. The enzyme catalyses Preferential cleavage of bonds with hydrophobic residues in P1'. Also 3-Asn-|-Gln-4 and 8-Gly-|-Ser-9 bonds in insulin B chain.. Its function is as follows. Secreted metalloproteinase that allows assimilation of proteinaceous substrates. Shows high activities on basic nuclear substrates such as histone and protamine. May be involved in virulence. This chain is Neutral protease 2 homolog MGYG_03465, found in Arthroderma gypseum (strain ATCC MYA-4604 / CBS 118893) (Microsporum gypseum).